The chain runs to 239 residues: Phosphothreonine lyase OspF (239 aa).

His104 (proton donor) is an active-site residue. The Proton acceptor role is filled by Lys134.

It belongs to the phosphothreonine lyase family.

The protein localises to the secreted. In terms of biological role, catalyzes the removal of the phosphate group from the phosphothreonine in the mitogen-activated protein kinases such as MAPK2/ERK2, MAPK3/ERK1, MAPK8 and MAPK14 in an irreversible reaction, thus preventing the downstream phosphorylation of histone H3. This epigenetic modification results in inhibition of the transcription of a specific subset of pro-inflammatory genes, and ultimately to a reduced immune response against the invading pathogen. The diminished immune response enhances the bacterium's ability to disseminate and multiply within the host. This is Phosphothreonine lyase OspF (ospF) from Shigella sonnei (strain Ss046).